The primary structure comprises 338 residues: Phosphate acyltransferase (338 aa).

The protein belongs to the PlsX family. As to quaternary structure, homodimer. Probably interacts with PlsY.

The protein resides in the cytoplasm. It catalyses the reaction a fatty acyl-[ACP] + phosphate = an acyl phosphate + holo-[ACP]. Its pathway is lipid metabolism; phospholipid metabolism. Its function is as follows. Catalyzes the reversible formation of acyl-phosphate (acyl-PO(4)) from acyl-[acyl-carrier-protein] (acyl-ACP). This enzyme utilizes acyl-ACP as fatty acyl donor, but not acyl-CoA. The protein is Phosphate acyltransferase of Alcanivorax borkumensis (strain ATCC 700651 / DSM 11573 / NCIMB 13689 / SK2).